The sequence spans 192 residues: GTP cyclohydrolase 1 (192 aa).

Residues cysteine 81, histidine 84, and cysteine 153 each contribute to the Zn(2+) site.

Belongs to the GTP cyclohydrolase I family. As to quaternary structure, toroid-shaped homodecamer, composed of two pentamers of five dimers.

The enzyme catalyses GTP + H2O = 7,8-dihydroneopterin 3'-triphosphate + formate + H(+). Its pathway is cofactor biosynthesis; 7,8-dihydroneopterin triphosphate biosynthesis; 7,8-dihydroneopterin triphosphate from GTP: step 1/1. The polypeptide is GTP cyclohydrolase 1 (Streptococcus mutans serotype c (strain ATCC 700610 / UA159)).